The primary structure comprises 951 residues: Coiled-coil and C2 domain-containing protein 1A (951 aa).

Disordered stretches follow at residues 80–139, 185–266, 306–346, and 437–491; these read CMRD…LETT, AIDE…RQRD, VDLS…PPPR, and NQDE…TRAQ. Acidic residues predominate over residues 84–104; it reads PDEDEEEGTDEDDLEADDDLL. Phosphothreonine is present on residues threonine 92, threonine 204, and threonine 206. Low complexity predominate over residues 201–210; sequence PASTPTYSPA. Serine 208 bears the Phosphoserine; by CDK1 mark. Phosphoserine is present on residues serine 253 and serine 324. Over residues 311–333 the composition is skewed to pro residues; the sequence is LPPPPDQLPPDPPSPPSQPPTPA. A coiled-coil region spans residues 346-392; that stretch reads RTLLEALEQRMERYQVAAAQAKSKGDQRKARMHERIVKQYQDAIRAH. Residue serine 455 is modified to Phosphoserine. The segment covering 475 to 488 has biased composition (low complexity); sequence SAPTAKAPPKATST. A coiled-coil region spans residues 484–517; it reads KATSTRAQQQLAFLEGRKKQLLQAALRAKQKNDV. In terms of domain architecture, C2 spans 637 to 771; it reads RFEQRTFSVI…EIACEVREIL (135 aa). The tract at residues 818 to 841 is disordered; sequence TQVAGPKGKAPPVPAPARESGNRS.

Belongs to the CC2D1 family. Phosphorylation on Ser-208 by CDK1 promotes spindle pole localization and association with SCC1/RAD21.

It is found in the cytoplasm. Its subcellular location is the nucleus. The protein resides in the cytoskeleton. The protein localises to the microtubule organizing center. It localises to the centrosome. Its function is as follows. Transcription factor that binds specifically to the DRE (dual repressor element) and represses HTR1A gene transcription in neuronal cells. The combination of calcium and ATP specifically inactivates the binding with FRE. May play a role in the altered regulation of HTR1A associated with anxiety and major depression. Mediates HDAC-independent repression of HTR1A promoter in neuronal cell. Performs essential function in controlling functional maturation of synapses. Plays distinct roles depending on its localization. When cytoplasmic, acts as a scaffold protein in the PI3K/PDK1/AKT pathway. Repressor of HTR1A when nuclear. In the centrosome, regulates spindle pole localization of the cohesin subunit SCC1/RAD21, thereby mediating centriole cohesion during mitosis. This Homo sapiens (Human) protein is Coiled-coil and C2 domain-containing protein 1A (CC2D1A).